A 677-amino-acid chain; its full sequence is Pro-neuregulin-1, membrane-bound isoform (677 aa).

Basic and acidic residues predominate over residues 1–12 (MAEKKKVKEGKG). 2 disordered regions span residues 1–43 (MAEK…KEIK) and 78–106 (GAKN…ISKA). The Extracellular portion of the chain corresponds to 1-260 (MAEKKKVKEG…MEAEELYQKR (260 aa)). Residues 13–24 (RKGKGKKDRKGK) show a composition bias toward basic residues. The Ig-like C2-type domain occupies 37–132 (PKLKEIKTQS…GNDTVTVNVT (96 aa)). Residues cysteine 57 and cysteine 116 are joined by a disulfide bond. Residues 78-91 (GAKNKPDSKPEHIK) are compositionally biased toward basic and acidic residues. N-linked (GlcNAc...) asparagine glycosylation is found at asparagine 124 and asparagine 130. Residues 188-232 (HLIKCSDKEKTYCVNGGECYVLNGITSSNQFMCKCKPGFTGARCT) form the EGF-like domain. 3 disulfides stabilise this stretch: cysteine 192-cysteine 206, cysteine 200-cysteine 220, and cysteine 222-cysteine 231. The chain crosses the membrane as a helical span at residues 261–280 (VLTITGICIDLLVVGDMCVV). The Cytoplasmic segment spans residues 281-677 (DAYCKTKKQR…RKMTCKTLFI (397 aa)). Residues 294–315 (NDRLRQSLRERNKNITNKDNRP) show a composition bias toward basic and acidic residues. Disordered stretches follow at residues 294–326 (NDRL…PRKN), 350–375 (ETSF…PSHS), 397–418 (SVEN…GIGG), 457–479 (VEFK…ESSL), and 503–617 (PPRL…FLSI). The span at 351 to 375 (TSFSTSHYTSTTHHSTTVTQTPSHS) shows a compositional bias: low complexity. Residues 397-407 (SVENSRHTSPT) show a composition bias toward polar residues. Residues 505–515 (RLREKRYDRKT) are compositionally biased toward basic and acidic residues. The span at 568 to 578 (VNSRRQKRTKP) shows a compositional bias: basic residues. Residues 591–600 (DSSSESSTSE) show a composition bias toward low complexity.

The protein belongs to the neuregulin family. Proteolytic cleavage close to the plasma membrane on the external face leads to the release of the soluble growth factor form. In terms of processing, extensive glycosylation precedes the proteolytic cleavage. In terms of tissue distribution, isoform alpha1 is expressed in brain and muscle. Isoform CRD is expressed in brain and spinal cord, but at very low level in muscle.

It localises to the cell membrane. Its subcellular location is the secreted. Its function is as follows. Direct ligand for the ERBB tyrosine kinase receptors. Induces expression of acetylcholine receptor in synaptic nuclei. This is Pro-neuregulin-1, membrane-bound isoform (nrg1) from Xenopus laevis (African clawed frog).